The primary structure comprises 425 residues: Serine--tRNA ligase (425 aa).

233 to 235 (TAE) contributes to the L-serine binding site. 264-266 (RRE) is an ATP binding site. Glu-287 lines the L-serine pocket. 351-354 (EISS) contacts ATP. L-serine is bound at residue Ser-387.

The protein belongs to the class-II aminoacyl-tRNA synthetase family. Type-1 seryl-tRNA synthetase subfamily. Homodimer. The tRNA molecule binds across the dimer.

It is found in the cytoplasm. It carries out the reaction tRNA(Ser) + L-serine + ATP = L-seryl-tRNA(Ser) + AMP + diphosphate + H(+). The enzyme catalyses tRNA(Sec) + L-serine + ATP = L-seryl-tRNA(Sec) + AMP + diphosphate + H(+). The protein operates within aminoacyl-tRNA biosynthesis; selenocysteinyl-tRNA(Sec) biosynthesis; L-seryl-tRNA(Sec) from L-serine and tRNA(Sec): step 1/1. Functionally, catalyzes the attachment of serine to tRNA(Ser). Is also able to aminoacylate tRNA(Sec) with serine, to form the misacylated tRNA L-seryl-tRNA(Sec), which will be further converted into selenocysteinyl-tRNA(Sec). In Thermotoga neapolitana (strain ATCC 49049 / DSM 4359 / NBRC 107923 / NS-E), this protein is Serine--tRNA ligase.